Consider the following 2049-residue polypeptide: Non-reducing polyketide synthase hmp3 (2049 aa).

An N-terminal acylcarrier protein transacylase (SAT) domain region spans residues 9 to 246 (LYFGDQTDSW…NELSIHALQH (238 aa)). Positions 365-793 (PGRIAIVGMA…GGNASLILED (429 aa)) constitute a Ketosynthase family 3 (KS3) domain. Residues Cys538, His673, and His712 each act as for beta-ketoacyl synthase activity in the active site. The malonyl-CoA:ACP transacylase (MAT) domain stretch occupies residues 887–1146 (VFVFTGQGSH…VDFVGALGAL (260 aa)). Catalysis depends on Ser978, which acts as the For acyl/malonyl transferase activity. The segment at 1265-1404 (QQIVEESSSP…AQTLQTSWNR (140 aa)) is N-terminal hotdog fold. The 309-residue stretch at 1265-1573 (QQIVEESSSP…FHEVSNNVLD (309 aa)) folds into the PKS/mFAS DH domain. The tract at residues 1269-1572 (EESSSPSLHV…SFHEVSNNVL (304 aa)) is product template (PT) domain. Residues 1425 to 1573 (GHRMLPSILY…FHEVSNNVLD (149 aa)) form a C-terminal hotdog fold region. One can recognise a Carrier domain in the interval 1626 to 1704 (SSESELFHTI…DLRNEFARSS (79 aa)). An O-(pantetheine 4'-phosphoryl)serine modification is found at Ser1663. The segment at 1700-1747 (FARSSTSTPPSKTFSEFSIVDATPESTRSSSRAPSEKKEPAPASEKSE) is disordered. Residues 1703 to 1717 (SSTSTPPSKTFSEFS) show a composition bias toward low complexity. The span at 1723 to 1732 (PESTRSSSRA) shows a compositional bias: polar residues. Basic and acidic residues predominate over residues 1733–1747 (PSEKKEPAPASEKSE). Residues 1761-1951 (SPLPSARITL…KRTAIIWAKK (191 aa)) are thioesterase (TE) domain.

It participates in secondary metabolite biosynthesis. Its function is as follows. Non-reducing polyketide synthase; part of the gene cluster that mediates the biosynthesis of hypothemycin, a resorcylic acid lactone (RAL) that irreversibly inhibits a subset of protein kinases with a conserved cysteine in the ATP binding site such as human ERK2. The first step is performed by both PKSs hmp3 and hmp8 and leads to the production of 7',8'-dehydrozearalenol (DHZ). The highly reducing PKS hpm8 synthesizes the reduced hexaketide (7S,11S,2E,8E)-7,11-dihydroxy-dodeca-2,8-dienoate, which is transferred downstream to the non-reducing PKS hpm3. Hpm3 then extends the reduced hexaketide to a nonaketide, after which regioselective cyclization and macrolactonization affords DHZ. The next step is the conversion of DHZ into aigialomycin C and is performed by the O-methyltransferase hmp5, the FAD-binding monooxygenase hmp7, and the cytochrome P450 monooxygenase hmp1. The wide substrate tolerance of the hmp5 and hmp7 implies that the reactions from DHZ to aigialomycin C can occur in any order. The steps from aigialomycin C to hypothemycin are less well established. The FAD-linked oxidoreductase hmp9 presumably catalyzes oxidation of the C-6' hydroxyl to a ketone. The timing of this oxidation is important, since the resulting enone functional group is a Michael acceptor that can react spontaneously with glutathione, an abundant metabolite in fungal cells. The glutathione S-transferase hmp2 catalyzes cis-trans isomerization of the 7',8' double bond with equilibrium favoring the trans isomer. The hpm6-encoded transporter might preferentially pump hypothemycin out of the cell relative to the trans isomer aigialomycin A. The cis-to-trans isomerization may be coupled with C-4' hydroxylation, since all known hypothemycin analogs containing the enone functional group also have hydroxyl groups at both C-4' and C-5'. The sequence is that of Non-reducing polyketide synthase hmp3 from Hypomyces subiculosus (Nectria subiculosa).